Reading from the N-terminus, the 145-residue chain is 3-dehydroquinate dehydratase (145 aa).

Tyrosine 23 functions as the Proton acceptor in the catalytic mechanism. Substrate contacts are provided by asparagine 75, histidine 81, and aspartate 88. Histidine 101 (proton donor) is an active-site residue. Substrate-binding positions include 102 to 103 (LS) and arginine 112.

The protein belongs to the type-II 3-dehydroquinase family. Homododecamer.

The enzyme catalyses 3-dehydroquinate = 3-dehydroshikimate + H2O. It functions in the pathway metabolic intermediate biosynthesis; chorismate biosynthesis; chorismate from D-erythrose 4-phosphate and phosphoenolpyruvate: step 3/7. Functionally, catalyzes a trans-dehydration via an enolate intermediate. The chain is 3-dehydroquinate dehydratase from Legionella pneumophila (strain Lens).